The primary structure comprises 355 residues: Alanine racemase (355 aa).

The active-site Proton acceptor; specific for D-alanine is the Lys34. Lys34 is modified (N6-(pyridoxal phosphate)lysine). Residue Arg133 coordinates substrate. Residue Tyr249 is the Proton acceptor; specific for L-alanine of the active site. Met297 contributes to the substrate binding site.

It belongs to the alanine racemase family. The cofactor is pyridoxal 5'-phosphate.

It carries out the reaction L-alanine = D-alanine. Its pathway is amino-acid biosynthesis; D-alanine biosynthesis; D-alanine from L-alanine: step 1/1. In terms of biological role, catalyzes the interconversion of L-alanine and D-alanine. May also act on other amino acids. The chain is Alanine racemase (alr) from Rickettsia peacockii (strain Rustic).